We begin with the raw amino-acid sequence, 88 residues long: Small ribosomal subunit protein bS20 (88 aa).

The disordered stretch occupies residues 1-27; sequence MANSKSAKKRALQSEKRRQHNASRRSM.

Belongs to the bacterial ribosomal protein bS20 family.

Binds directly to 16S ribosomal RNA. This chain is Small ribosomal subunit protein bS20, found in Shewanella sp. (strain ANA-3).